The chain runs to 460 residues: Serine--tRNA ligase (460 aa).

Positions 43-66 are enriched in basic and acidic residues; the sequence is AEGDGLRQERNEVSSKIGELKQDG. The interval 43–81 is disordered; the sequence is AEGDGLRQERNEVSSKIGELKQDGKDEEAQEAIDRSQEL. 242 to 244 lines the L-serine pocket; it reads TAE. ATP is bound by residues 273–275 and valine 289; that span reads RRE. Glutamate 296 is an L-serine binding site. 369–372 is an ATP binding site; the sequence is EVSS. Serine 405 contacts L-serine.

This sequence belongs to the class-II aminoacyl-tRNA synthetase family. Type-1 seryl-tRNA synthetase subfamily. Homodimer. The tRNA molecule binds across the dimer.

The protein localises to the cytoplasm. It carries out the reaction tRNA(Ser) + L-serine + ATP = L-seryl-tRNA(Ser) + AMP + diphosphate + H(+). The enzyme catalyses tRNA(Sec) + L-serine + ATP = L-seryl-tRNA(Sec) + AMP + diphosphate + H(+). It functions in the pathway aminoacyl-tRNA biosynthesis; selenocysteinyl-tRNA(Sec) biosynthesis; L-seryl-tRNA(Sec) from L-serine and tRNA(Sec): step 1/1. In terms of biological role, catalyzes the attachment of serine to tRNA(Ser). Is also probably able to aminoacylate tRNA(Sec) with serine, to form the misacylated tRNA L-seryl-tRNA(Sec), which will be further converted into selenocysteinyl-tRNA(Sec). The polypeptide is Serine--tRNA ligase (serS) (Haloarcula marismortui (strain ATCC 43049 / DSM 3752 / JCM 8966 / VKM B-1809) (Halobacterium marismortui)).